We begin with the raw amino-acid sequence, 251 residues long: Triosephosphate isomerase (251 aa).

Substrate is bound at residue Asn9–Lys11. His95 acts as the Electrophile in catalysis. The active-site Proton acceptor is the Glu167. Substrate is bound by residues Gly173, Ser213, and Gly234 to Gly235.

The protein belongs to the triosephosphate isomerase family. Homodimer.

The protein localises to the cytoplasm. The enzyme catalyses D-glyceraldehyde 3-phosphate = dihydroxyacetone phosphate. It functions in the pathway carbohydrate biosynthesis; gluconeogenesis. Its pathway is carbohydrate degradation; glycolysis; D-glyceraldehyde 3-phosphate from glycerone phosphate: step 1/1. Involved in the gluconeogenesis. Catalyzes stereospecifically the conversion of dihydroxyacetone phosphate (DHAP) to D-glyceraldehyde-3-phosphate (G3P). This chain is Triosephosphate isomerase, found in Geotalea uraniireducens (strain Rf4) (Geobacter uraniireducens).